We begin with the raw amino-acid sequence, 37 residues long: Cytochrome b6-f complex subunit 5 (37 aa).

A helical transmembrane segment spans residues 5 to 25 (FLLGIILGLIPITLIGLFVTA).

The protein belongs to the PetG family. The 4 large subunits of the cytochrome b6-f complex are cytochrome b6, subunit IV (17 kDa polypeptide, PetD), cytochrome f and the Rieske protein, while the 4 small subunits are PetG, PetL, PetM and PetN. The complex functions as a dimer.

It is found in the plastid membrane. Component of the cytochrome b6-f complex, which mediates electron transfer between photosystem II (PSII) and photosystem I (PSI), cyclic electron flow around PSI, and state transitions. PetG is required for either the stability or assembly of the cytochrome b6-f complex. The chain is Cytochrome b6-f complex subunit 5 from Cuscuta obtusiflora (Peruvian dodder).